Reading from the N-terminus, the 219-residue chain is Small ribosomal subunit protein uS2m (219 aa).

It belongs to the universal ribosomal protein uS2 family. Component of the mitochondrial ribosome small subunit.

It localises to the mitochondrion. This Arabidopsis thaliana (Mouse-ear cress) protein is Small ribosomal subunit protein uS2m (RPS2).